A 538-amino-acid polypeptide reads, in one-letter code: Phosphoenolpyruvate carboxykinase (ATP) (538 aa).

Positions 61, 195, and 201 each coordinate substrate. Residues Lys-201, His-220, and 236–244 (GLSGTGKTT) each bind ATP. Residues Lys-201 and His-220 each contribute to the Mn(2+) site. Asp-257 contributes to the Mn(2+) binding site. Residues Glu-285, Arg-323, and Thr-449 each contribute to the ATP site. A substrate-binding site is contributed by Arg-323.

Belongs to the phosphoenolpyruvate carboxykinase (ATP) family. It depends on Mn(2+) as a cofactor.

The protein localises to the cytoplasm. It carries out the reaction oxaloacetate + ATP = phosphoenolpyruvate + ADP + CO2. It functions in the pathway carbohydrate biosynthesis; gluconeogenesis. Involved in the gluconeogenesis. Catalyzes the conversion of oxaloacetate (OAA) to phosphoenolpyruvate (PEP) through direct phosphoryl transfer between the nucleoside triphosphate and OAA. The polypeptide is Phosphoenolpyruvate carboxykinase (ATP) (Nitrobacter hamburgensis (strain DSM 10229 / NCIMB 13809 / X14)).